Reading from the N-terminus, the 611-residue chain is Putative clathrin assembly protein At4g02650 (611 aa).

One can recognise an ENTH domain in the interval 26-162; the sequence is GRSSSLTELE…DYRMQGRRGK (137 aa). 2 disordered regions span residues 158–184 and 337–406; these read GRRG…HRGT and TTKS…GDLL. The segment covering 386–401 has biased composition (basic and acidic residues); sequence METKKDVEEVVSRQDQ.

Its subcellular location is the membrane. The protein localises to the clathrin-coated pit. It localises to the golgi apparatus. The protein resides in the cytoplasmic vesicle. It is found in the clathrin-coated vesicle. This chain is Putative clathrin assembly protein At4g02650, found in Arabidopsis thaliana (Mouse-ear cress).